We begin with the raw amino-acid sequence, 279 residues long: MVKLTNPPKSPKELGFDEFPSIGIIGGSGLYDPGIFENAVEVQIHTPYGLPSDNVIVGRVAGRVVAFLPRHGRGHKYPPHKIPYRANIYSLYMLGVRSIVAVSAVGSLRPDYAPGDFVVPDQFVDMTKGREYTFYDGPRTCHIQIGLEPFTQEIRQILIETAKKYNRTHDGGCYVCIEGPRFSTKAESRIWREVFGCDIIGMTLVPEINLARELGMCYGLIALVTDYDIWVPHQPVTAEAVEKMMTEKLGIIKKVIAEAVPKLPAELPKCSETLKYACV.

Residues S28, 70–71, and 103–104 contribute to the phosphate site; these read RH and SA. Substrate is bound at residue M202. T203 lines the phosphate pocket. 226–228 is a binding site for substrate; the sequence is DYD.

Belongs to the PNP/MTAP phosphorylase family. MTAP subfamily. As to quaternary structure, homohexamer. Dimer of a homotrimer.

It catalyses the reaction S-methyl-5'-thioadenosine + phosphate = 5-(methylsulfanyl)-alpha-D-ribose 1-phosphate + adenine. The protein operates within amino-acid biosynthesis; L-methionine biosynthesis via salvage pathway; S-methyl-5-thio-alpha-D-ribose 1-phosphate from S-methyl-5'-thioadenosine (phosphorylase route): step 1/1. Functionally, catalyzes the reversible phosphorylation of S-methyl-5'-thioadenosine (MTA) to adenine and 5-methylthioribose-1-phosphate. Involved in the breakdown of MTA, a major by-product of polyamine biosynthesis. Responsible for the first step in the methionine salvage pathway after MTA has been generated from S-adenosylmethionine. Has broad substrate specificity with 6-aminopurine nucleosides as preferred substrates. The sequence is that of S-methyl-5'-thioadenosine phosphorylase from Pyrobaculum aerophilum (strain ATCC 51768 / DSM 7523 / JCM 9630 / CIP 104966 / NBRC 100827 / IM2).